The chain runs to 247 residues: DNA polymerase sliding clamp 1 (247 aa).

The protein belongs to the PCNA family. In terms of assembly, heterotrimer. The subunits circularize to form a toroid; DNA passes through its center. Replication factor C (RFC) is required to load the toroid on the DNA.

Its function is as follows. Sliding clamp subunit that acts as a moving platform for DNA processing. Responsible for tethering the catalytic subunit of DNA polymerase and other proteins to DNA during high-speed replication. In Aeropyrum pernix (strain ATCC 700893 / DSM 11879 / JCM 9820 / NBRC 100138 / K1), this protein is DNA polymerase sliding clamp 1.